Reading from the N-terminus, the 346-residue chain is uncharacterized protein (346 aa).

The tract at residues Thr-321–Thr-346 is disordered.

This is an uncharacterized protein from Mycobacterium tuberculosis (strain CDC 1551 / Oshkosh).